We begin with the raw amino-acid sequence, 541 residues long: Chaperonin GroEL (541 aa).

Residues 29–32 (TLGP), 86–90 (DGTTT), glycine 413, 477–479 (DAL), and aspartate 493 contribute to the ATP site.

It belongs to the chaperonin (HSP60) family. In terms of assembly, forms a cylinder of 14 subunits composed of two heptameric rings stacked back-to-back. Interacts with the co-chaperonin GroES.

It is found in the cytoplasm. The enzyme catalyses ATP + H2O + a folded polypeptide = ADP + phosphate + an unfolded polypeptide.. Functionally, together with its co-chaperonin GroES, plays an essential role in assisting protein folding. The GroEL-GroES system forms a nano-cage that allows encapsulation of the non-native substrate proteins and provides a physical environment optimized to promote and accelerate protein folding. This Clostridium beijerinckii (strain ATCC 51743 / NCIMB 8052) (Clostridium acetobutylicum) protein is Chaperonin GroEL.